Consider the following 130-residue polypeptide: Flagellar assembly factor FliW (130 aa).

It belongs to the FliW family. Interacts with translational regulator CsrA and flagellin(s).

It is found in the cytoplasm. Its function is as follows. Acts as an anti-CsrA protein, binds CsrA and prevents it from repressing translation of its target genes, one of which is flagellin. Binds to flagellin and participates in the assembly of the flagellum. This chain is Flagellar assembly factor FliW, found in Borrelia duttonii (strain Ly).